We begin with the raw amino-acid sequence, 186 residues long: MSVADIKKGVEQKMQRSIEAFKNDLAKIRTGRAHTGLLDHVQVDYYGSMVPISQVANLTLVDARTIGVQPWEKNMVAKVEKAIREADLGLNPATAGDLIRVPMPALTEERRRELTKVVKGEGETAKVAVRNLRRDANEQLKKLVKDKEISEDDERRAGDDVQKLTDKHVAEIDKLVQSKEAEIMTV.

Belongs to the RRF family.

The protein localises to the cytoplasm. Its function is as follows. Responsible for the release of ribosomes from messenger RNA at the termination of protein biosynthesis. May increase the efficiency of translation by recycling ribosomes from one round of translation to another. This chain is Ribosome-recycling factor, found in Burkholderia thailandensis (strain ATCC 700388 / DSM 13276 / CCUG 48851 / CIP 106301 / E264).